A 121-amino-acid polypeptide reads, in one-letter code: Large ribosomal subunit protein bL20 (121 aa).

It belongs to the bacterial ribosomal protein bL20 family.

In terms of biological role, binds directly to 23S ribosomal RNA and is necessary for the in vitro assembly process of the 50S ribosomal subunit. It is not involved in the protein synthesizing functions of that subunit. This is Large ribosomal subunit protein bL20 from Dinoroseobacter shibae (strain DSM 16493 / NCIMB 14021 / DFL 12).